The chain runs to 215 residues: Somatotropin (215 aa).

An N-terminal signal peptide occupies residues 1-25 (MAPGMRVCLLLLIAFTLLGPQRAAA). His44 provides a ligand contact to Zn(2+). Ser130 carries the phosphoserine modification. Glu197 lines the Zn(2+) pocket.

The protein belongs to the somatotropin/prolactin family.

It localises to the secreted. Plays an important role in growth control. Its major role in stimulating body growth is to stimulate the liver and other tissues to secrete IGF1. It stimulates both the differentiation and proliferation of myoblasts. It also stimulates amino acid uptake and protein synthesis in muscle and other tissues. The sequence is that of Somatotropin (GH1) from Monodelphis domestica (Gray short-tailed opossum).